Here is a 164-residue protein sequence, read N- to C-terminus: FMN reductase (NADH) RutF (164 aa).

Belongs to the non-flavoprotein flavin reductase family. RutF subfamily.

The catalysed reaction is FMNH2 + NAD(+) = FMN + NADH + 2 H(+). Catalyzes the reduction of FMN to FMNH2 which is used to reduce pyrimidine by RutA via the Rut pathway. The protein is FMN reductase (NADH) RutF of Klebsiella variicola (strain At-22).